Here is a 202-residue protein sequence, read N- to C-terminus: Peptidyl-tRNA hydrolase (202 aa).

Residue Tyr-14 participates in tRNA binding. The Proton acceptor role is filled by His-19. Residues Phe-64, Asn-66, and Asn-112 each contribute to the tRNA site.

The protein belongs to the PTH family. Monomer.

The protein resides in the cytoplasm. It carries out the reaction an N-acyl-L-alpha-aminoacyl-tRNA + H2O = an N-acyl-L-amino acid + a tRNA + H(+). Its function is as follows. Hydrolyzes ribosome-free peptidyl-tRNAs (with 1 or more amino acids incorporated), which drop off the ribosome during protein synthesis, or as a result of ribosome stalling. Catalyzes the release of premature peptidyl moieties from peptidyl-tRNA molecules trapped in stalled 50S ribosomal subunits, and thus maintains levels of free tRNAs and 50S ribosomes. This Methylobacterium radiotolerans (strain ATCC 27329 / DSM 1819 / JCM 2831 / NBRC 15690 / NCIMB 10815 / 0-1) protein is Peptidyl-tRNA hydrolase.